A 359-amino-acid chain; its full sequence is DNA-directed RNA polymerase subunit alpha (359 aa).

Residues 1–226 (MLISQRPSLA…ELFGLARELN (226 aa)) form an alpha N-terminal domain (alpha-NTD) region. Residues 241–359 (ADTIAAYAMP…GQDYAETEQL (119 aa)) are alpha C-terminal domain (alpha-CTD). A disordered region spans residues 315–359 (FDPSAAAAEYPSEGWASETETVGGLGRVEDNGYDDGQDYAETEQL). Acidic residues predominate over residues 345–359 (NGYDDGQDYAETEQL).

It belongs to the RNA polymerase alpha chain family. As to quaternary structure, homodimer. The RNAP catalytic core consists of 2 alpha, 1 beta, 1 beta' and 1 omega subunit. When a sigma factor is associated with the core the holoenzyme is formed, which can initiate transcription.

It catalyses the reaction RNA(n) + a ribonucleoside 5'-triphosphate = RNA(n+1) + diphosphate. In terms of biological role, DNA-dependent RNA polymerase catalyzes the transcription of DNA into RNA using the four ribonucleoside triphosphates as substrates. The polypeptide is DNA-directed RNA polymerase subunit alpha (Saccharopolyspora erythraea (strain ATCC 11635 / DSM 40517 / JCM 4748 / NBRC 13426 / NCIMB 8594 / NRRL 2338)).